The sequence spans 658 residues: Threonine--tRNA ligase (658 aa).

A TGS domain is found at 1 to 61 (MIELVFPDGS…EKGGAFKILT (61 aa)). Residues 243–535 (DHRKLGRQMD…LIENYAGAFP (293 aa)) are catalytic. Zn(2+)-binding residues include Cys335, His386, and His512.

The protein belongs to the class-II aminoacyl-tRNA synthetase family. In terms of assembly, homodimer. It depends on Zn(2+) as a cofactor.

The protein localises to the cytoplasm. It carries out the reaction tRNA(Thr) + L-threonine + ATP = L-threonyl-tRNA(Thr) + AMP + diphosphate + H(+). Its function is as follows. Catalyzes the attachment of threonine to tRNA(Thr) in a two-step reaction: L-threonine is first activated by ATP to form Thr-AMP and then transferred to the acceptor end of tRNA(Thr). Also edits incorrectly charged L-seryl-tRNA(Thr). The protein is Threonine--tRNA ligase of Phenylobacterium zucineum (strain HLK1).